A 657-amino-acid polypeptide reads, in one-letter code: Pyoverdine export ATP-binding/permease protein PvdT (657 aa).

The ABC transporter domain maps to 6–245 (IDLRGIRKSY…RSVNPAALQA (240 aa)). An ATP-binding site is contributed by 43–50 (GASGSGKS). Transmembrane regions (helical) follow at residues 285–305 (ALTL…LAVG), 539–559 (IAAI…LMTV), 590–610 (LSVV…AALL), and 620–640 (LPAV…FGFM).

It belongs to the ABC transporter superfamily. Macrolide exporter (TC 3.A.1.122) family. In terms of assembly, part of the tripartite efflux system PvdRT-OpmQ, which is composed of an inner membrane component with both ATPase and permease domains, PvdT, a periplasmic membrane fusion protein, PvdR, and an outer membrane component, OpmQ.

It is found in the cell inner membrane. In terms of biological role, part of the tripartite efflux system PvdRT-OpmQ required for the secretion into the extracellular milieu of the siderophore pyoverdine (PVD), which is involved in iron acquisition. This subunit binds PVD and drives its secretion by hydrolyzing ATP. The system is responsible for export of newly synthesized PVD after the final steps of biosynthesis have taken place in the periplasm. It is also responsible for recycling of PVD after internalization of ferri-PVD into the periplasm by the outer-membrane receptor FpvA and release of iron from PVD, thus making PVD available for new cycles of iron uptake. The polypeptide is Pyoverdine export ATP-binding/permease protein PvdT (Pseudomonas syringae pv. syringae (strain B728a)).